The chain runs to 219 residues: Small ribosomal subunit protein uS3 (219 aa).

The 69-residue stretch at 38–106 (IREYINVRLK…RVHINILEVK (69 aa)) folds into the KH type-2 domain.

Belongs to the universal ribosomal protein uS3 family. Part of the 30S ribosomal subunit. Forms a tight complex with proteins S10 and S14.

Its function is as follows. Binds the lower part of the 30S subunit head. Binds mRNA in the 70S ribosome, positioning it for translation. This chain is Small ribosomal subunit protein uS3, found in Bacillus thuringiensis (strain Al Hakam).